The chain runs to 1026 residues: Adenylate-forming reductase 06235 (1026 aa).

Residues 37-422 form an adenylation (A) domain region; that stretch reads FEFHAKANPD…LGRIDNQVKI (386 aa). Residues 332 to 333 and 412 to 415 each bind AMP; these read VT and HLGR. Residues 556-638 form a thiolation and peptide carrier (T) domain region; the sequence is SLVSTVGSTV…ALFIWILVTK (83 aa). Residues 682 to 901 form a reductase (R) domain region; it reads CIRRVCARIY…PPTKMWVKGV (220 aa). NADP(+)-binding positions include 685–688, 769–771, and Tyr-840; these read RVCA and TAL.

The protein belongs to the adenylate-forming reductase family.

Its function is as follows. Adenylate-forming reductase, a natural product biosynthesis enzyme that resembles non-ribosomal peptide synthetases, yet serves to modify one substrate, rather than to condense two or more building blocks. The A-domain preferentially accepts L-serine, L-alanine and L-valine as substrates. The natural product of the enzyme is not yet known. The sequence is that of Adenylate-forming reductase 06235 from Coprinopsis cinerea (strain Okayama-7 / 130 / ATCC MYA-4618 / FGSC 9003) (Inky cap fungus).